We begin with the raw amino-acid sequence, 5121 residues long: Hydrocephalus-inducing protein homolog (5121 aa).

An interaction with KIF9 region spans residues 363-754; that stretch reads EFFEECITDP…VLFSSPTPSG (392 aa). Over residues 956-967 the composition is skewed to basic residues; that stretch reads LSKKGRVKKGHA. Disordered regions lie at residues 956-987, 1925-1951, 2155-2186, 2333-2459, 2482-2534, 2664-2684, and 3852-3874; these read LSKK…SPVF, LAQE…TSLS, SKAD…LPPG, EQER…KFKT, LPPA…AERE, TNTT…KQKM, and KPDH…TGST. The stretch at 1908–1933 forms a coiled coil; it reads EIKKSKEEQMRAKYLENLAQENEEED. Polar residues predominate over residues 1936-1951; the sequence is SSDQGTSNSTKRTSLS. The stretch at 2267-2365 forms a coiled coil; it reads AQDYAAMKAQ…EDELKRRVKK (99 aa). Composition is skewed to basic and acidic residues over residues 2333-2360, 2393-2418, 2444-2453, 2489-2498, and 2509-2534; these read EQER…DELK, VDVK…EELN, DNSKDPDKQL, EAPHEPDDQR, and KDRE…AERE. Residues 2504–2549 are a coiled coil; that stretch reads GRRGRKDRERERLEKERTEKERLEREKAERERLEKLRALEERSDWE. 2 stretches are compositionally biased toward polar residues: residues 2664-2679 and 3857-3874; these read TNTT…SSKG and GSAQ…TGST.

As to quaternary structure, interacts with KIF9.

Its subcellular location is the cell projection. The protein resides in the cilium. It is found in the cytoplasm. The protein localises to the cytoskeleton. It localises to the cilium axoneme. Its subcellular location is the flagellum. Its function is as follows. Required for ciliary motility. In Homo sapiens (Human), this protein is Hydrocephalus-inducing protein homolog (HYDIN).